The sequence spans 664 residues: Zinc finger protein 710 (664 aa).

Residues Lys-110 and Lys-113 each participate in a glycyl lysine isopeptide (Lys-Gly) (interchain with G-Cter in SUMO2) cross-link. Residues 121–141 (VYEVSVPGDDKDAGPAEAPAE) form a disordered region. 3 consecutive C2H2-type zinc fingers follow at residues 295-317 (WQCR…ILGH), 323-345 (HSCP…LLTH), and 351-373 (HKCQ…MLLH). A Glycyl lysine isopeptide (Lys-Gly) (interchain with G-Cter in SUMO2) cross-link involves residue Lys-377. 8 consecutive C2H2-type zinc fingers follow at residues 379 to 401 (YSCH…EVKH), 407 to 429 (HVCV…LASH), 435 to 457 (YQCL…MLKH), 463 to 485 (FVCT…SLTH), 491 to 513 (FKCE…MLIH), 519 to 541 (YQCH…MIVH), 547 to 569 (FKCK…MHLH), and 575 to 598 (FKCP…KVKH).

It belongs to the krueppel C2H2-type zinc-finger protein family.

It is found in the nucleus. In terms of biological role, may be involved in transcriptional regulation. This Homo sapiens (Human) protein is Zinc finger protein 710 (ZNF710).